A 143-amino-acid chain; its full sequence is Large ribosomal subunit protein uL13 (143 aa).

This sequence belongs to the universal ribosomal protein uL13 family. Part of the 50S ribosomal subunit.

In terms of biological role, this protein is one of the early assembly proteins of the 50S ribosomal subunit, although it is not seen to bind rRNA by itself. It is important during the early stages of 50S assembly. This Natranaerobius thermophilus (strain ATCC BAA-1301 / DSM 18059 / JW/NM-WN-LF) protein is Large ribosomal subunit protein uL13.